Consider the following 332-residue polypeptide: L-lactate dehydrogenase A chain (332 aa).

NAD(+) is bound by residues 29 to 57 and arginine 99; that span reads GMVGMASAVSILLKDLCDELALVDVMEDK. Substrate-binding residues include arginine 106, asparagine 138, and arginine 169. Asparagine 138 provides a ligand contact to NAD(+). Histidine 193 (proton acceptor) is an active-site residue. Threonine 248 lines the substrate pocket.

Belongs to the LDH/MDH superfamily. LDH family. Homotetramer.

Its subcellular location is the cytoplasm. It catalyses the reaction (S)-lactate + NAD(+) = pyruvate + NADH + H(+). It participates in fermentation; pyruvate fermentation to lactate; (S)-lactate from pyruvate: step 1/1. Functionally, interconverts simultaneously and stereospecifically pyruvate and lactate with concomitant interconversion of NADH and NAD(+). The protein is L-lactate dehydrogenase A chain (ldha) of Sphyraena argentea (Pacific barracuda).